An 85-amino-acid polypeptide reads, in one-letter code: Toxin BmKa1 (85 aa).

Residues 1 to 19 form the signal peptide; that stretch reads MNYLVFFSLALLLMTGVGS. The LCN-type CS-alpha/beta domain occupies 21-83; the sequence is RDGYIADDKN…VPIRVPGKCN (63 aa). Cystine bridges form between cysteine 31–cysteine 82, cysteine 35–cysteine 55, cysteine 41–cysteine 65, and cysteine 45–cysteine 67.

The protein belongs to the long (4 C-C) scorpion toxin superfamily. Sodium channel inhibitor family. Alpha subfamily. As to expression, expressed by the venom gland.

Its subcellular location is the secreted. Its function is as follows. Alpha toxins bind voltage-independently at site-3 of sodium channels (Nav) and inhibit the inactivation of the activated channels, thereby blocking neuronal transmission. The chain is Toxin BmKa1 from Olivierus martensii (Manchurian scorpion).